A 573-amino-acid polypeptide reads, in one-letter code: Flagellin B (573 aa).

This sequence belongs to the bacterial flagellin family. As to quaternary structure, heteromer of FlaA and FlaB. A flagellar filament composed exclusively of FlaA is indistinguishable in length from that of the wild-type and shows a slight reduction in motility. The flagellar filament composed exclusively of the FlaB is severely truncated in length and greatly reduced in motility. Thus, while both flagellins are not necessary for motility, both are required for a fully active flagellar filament.

The protein localises to the secreted. It is found in the bacterial flagellum. Its function is as follows. Flagellin is the subunit protein which polymerizes to form the filaments of bacterial flagella. The sequence is that of Flagellin B (flaB) from Campylobacter coli.